Here is an 828-residue protein sequence, read N- to C-terminus: DNA gyrase subunit A (828 aa).

A Topo IIA-type catalytic domain is found at 38 to 501 (LPDARDGLKP…SYESIDTEDL (464 aa)). The O-(5'-phospho-DNA)-tyrosine intermediate role is filled by tyrosine 126. The GyrA-box motif lies at 528-534 (QNRGGKG).

It belongs to the type II topoisomerase GyrA/ParC subunit family. Heterotetramer, composed of two GyrA and two GyrB chains. In the heterotetramer, GyrA contains the active site tyrosine that forms a transient covalent intermediate with DNA, while GyrB binds cofactors and catalyzes ATP hydrolysis.

It localises to the cytoplasm. It catalyses the reaction ATP-dependent breakage, passage and rejoining of double-stranded DNA.. In terms of biological role, a type II topoisomerase that negatively supercoils closed circular double-stranded (ds) DNA in an ATP-dependent manner to modulate DNA topology and maintain chromosomes in an underwound state. Negative supercoiling favors strand separation, and DNA replication, transcription, recombination and repair, all of which involve strand separation. Also able to catalyze the interconversion of other topological isomers of dsDNA rings, including catenanes and knotted rings. Type II topoisomerases break and join 2 DNA strands simultaneously in an ATP-dependent manner. The chain is DNA gyrase subunit A from Helicobacter pylori (strain J99 / ATCC 700824) (Campylobacter pylori J99).